The chain runs to 419 residues: MSLESYMNQIGQQARAASRLLAKASTKQKNMALFAMAEALENARPRLVEENAKDMENGRAKGLDSALLDRLLLDDKRIDGMIEGLKQVASLPDPIGEISDMVYLPSGIQRGQMRVPLGVIGIIYESRPNVTIDAASLCLKSGNATILRGGSEAFYSNQAIAEAVTAGVVAAGLPEHAVQVLNTTDREAVGKLISMPEFVDVIVPRGGKGLIERISKDARVPVIKHLDGNCHVYIDDEADLDKAFAIAMNAKTRRYGVCNAMESLLVHASVAGDILPKLVFALQEKGVSLVGCDQVRSVSGEIGAATEEDWYTEYLAPKLSIKIVANMDEAIAHINKYGSHHTDAIVSQNYTKARAFMTEVDSSSVMVNASTSFADGFEYGFGAEIGISTDKIHARGPVGLLGLTSQKYVVLGDGHTRDN.

It belongs to the gamma-glutamyl phosphate reductase family.

The protein resides in the cytoplasm. It catalyses the reaction L-glutamate 5-semialdehyde + phosphate + NADP(+) = L-glutamyl 5-phosphate + NADPH + H(+). The protein operates within amino-acid biosynthesis; L-proline biosynthesis; L-glutamate 5-semialdehyde from L-glutamate: step 2/2. Its function is as follows. Catalyzes the NADPH-dependent reduction of L-glutamate 5-phosphate into L-glutamate 5-semialdehyde and phosphate. The product spontaneously undergoes cyclization to form 1-pyrroline-5-carboxylate. The sequence is that of Gamma-glutamyl phosphate reductase from Marinomonas sp. (strain MWYL1).